The chain runs to 390 residues: Neuromedin-B receptor (390 aa).

A compositionally biased stretch (polar residues) spans 1–19 (MPSKSLSNLSVTTGANESG). Residues 1–22 (MPSKSLSNLSVTTGANESGSVP) form a disordered region. Over 1–41 (MPSKSLSNLSVTTGANESGSVPEGWERDFLPASDGTTTELV) the chain is Extracellular. Asn8 and Asn16 each carry an N-linked (GlcNAc...) asparagine glycan. The helical transmembrane segment at 42 to 65 (IRCVIPSLYLLIITVGLLGNIMLV) threads the bilayer. Residues 66-79 (KIFITNSAMRSVPN) lie on the Cytoplasmic side of the membrane. A helical transmembrane segment spans residues 80-99 (IFISNLAAGDLLLLLTCVPV). The Extracellular segment spans residues 100–117 (DASRYFFDEWMFGKVGCK). Cys116 and Cys198 are oxidised to a cystine. Residues 118 to 139 (LIPVIQLTSVGVSVFTLTALSA) traverse the membrane as a helical segment. Topologically, residues 140-156 (DRYRAIVNPMDMQTSGA) are cytoplasmic. Residues 157–177 (LLRTCVKAMGIWVVSVLLAVP) traverse the membrane as a helical segment. The Extracellular portion of the chain corresponds to 178–211 (EAVFSEVARISSLDNSSFTACIPYPQTDELHPKI). A glycan (N-linked (GlcNAc...) asparagine) is linked at Asn192. Residues 212 to 235 (HSVLIFLVYFLIPLAIISIYYYHI) form a helical membrane-spanning segment. Topologically, residues 236-266 (AKTLIKSAHNLPGEYNEHTKKQMETRKRLAK) are cytoplasmic. A helical membrane pass occupies residues 267 to 287 (IVLVFVGCFIFCWFPNHILYM). Residues 288–299 (YRSFNYNEIDPS) are Extracellular-facing. The helical transmembrane segment at 300-327 (LGHMIVTLVARVLSFGNSCVNPFALYLL) threads the bilayer. The Cytoplasmic segment spans residues 328–390 (SESFRRHFNS…GHSMKQEMAL (63 aa)). Cys341 is lipidated: S-palmitoyl cysteine. Residue Ser352 is modified to Phosphoserine.

This sequence belongs to the G-protein coupled receptor 1 family. In terms of tissue distribution, expressed in epididymis (at protein level).

The protein resides in the cell membrane. Functionally, receptor for neuromedin-B. Contributes to the maintenance of basal sigh rate through signaling in the pre-Botzinger complex, a cluster of several thousand neurons in the ventrolateral medulla responsible for inspiration during respiratory activity. Contributes to the induction of sneezing following exposure to chemical irritants or allergens which causes release of NMB by nasal sensory neurons and activation of NMBR-expressing neurons in the sneeze-evoking region of the brainstem. These in turn activate neurons of the caudal ventral respiratory group, giving rise to the sneezing response. Contributes to induction of acute itch, possibly through its activation on dorsal root ganglion neurons by the NMB peptide. Plays a role in the innate immune response to influenza A virus infection by enhancing interferon alpha expression and reducing expression of IL6. Plays a role in CSF1-induced proliferation of osteoclast precursors by contributing to the positive regulation of the expression of the CSF1 receptor CSF1R. The chain is Neuromedin-B receptor (NMBR) from Homo sapiens (Human).